Reading from the N-terminus, the 150-residue chain is CCAAT/enhancer-binding protein gamma (150 aa).

Lys-3 is covalently cross-linked (Glycyl lysine isopeptide (Lys-Gly) (interchain with G-Cter in SUMO2)). The tract at residues 27-94 is disordered; that stretch reads GLQQVPQLVP…QKAQDTLQRV (68 aa). Residues 28–37 show a composition bias toward low complexity; it reads LQQVPQLVPA. Residues 56 to 72 show a composition bias toward basic and acidic residues; the sequence is SPMDRNSDEYRQRRERN. A bZIP domain is found at 62–125; it reads SDEYRQRRER…SVLKDLFLEH (64 aa). Residues 66–93 form a basic motif region; the sequence is RQRRERNNMAVKKSRLKSKQKAQDTLQR. Residues 97-118 form a leucine-zipper region; it reads LKEENERLEAKIKLLTKELSVL.

The protein belongs to the bZIP family. C/EBP subfamily. Binds DNA as a dimer and can form stable heterodimers with CEBPA and CEBPB. Interacts with ZNF638; this interaction increases transcriptional activation.

The protein localises to the nucleus. Its function is as follows. Transcription factor that binds to the promoter and the enhancer regions of target genes. Binds to the enhancer element PRE-I (positive regulatory element-I) of the IL-4 gene. Binds to the promoter and the enhancer of the immunoglobulin heavy chain. Binds to GPE1, a cis-acting element in the G-CSF gene promoter. The protein is CCAAT/enhancer-binding protein gamma (CEBPG) of Homo sapiens (Human).